Here is a 209-residue protein sequence, read N- to C-terminus: Segregation and condensation protein B (209 aa).

Belongs to the ScpB family. As to quaternary structure, homodimer. Homodimerization may be required to stabilize the binding of ScpA to the Smc head domains. Component of a cohesin-like complex composed of ScpA, ScpB and the Smc homodimer, in which ScpA and ScpB bind to the head domain of Smc. The presence of the three proteins is required for the association of the complex with DNA.

It is found in the cytoplasm. In terms of biological role, participates in chromosomal partition during cell division. May act via the formation of a condensin-like complex containing Smc and ScpA that pull DNA away from mid-cell into both cell halves. This Geobacillus thermodenitrificans (strain NG80-2) protein is Segregation and condensation protein B.